The following is an 863-amino-acid chain: Potassium/sodium hyperpolarization-activated cyclic nucleotide-gated channel 2 (863 aa).

Over residues 1–10 (MDARGGGGRP) the composition is skewed to gly residues. The interval 1 to 131 (MDARGGGGRP…AGPAGEPRGS (131 aa)) is disordered. Residues 1-188 (MDARGGGGRP…PYSDFRFYWD (188 aa)) are Cytoplasmic-facing. The segment covering 17 to 47 (TPAPGPPPPPPPPAPPQPQPPPAPPPNPTTP) has biased composition (pro residues). Low complexity predominate over residues 106–128 (GAASGPSAAEEAGSEEAGPAGEP). 2 positions are modified to phosphoserine: Ser-119 and Ser-134. The segment at 131–182 (SQASFLQRQFGALLQPGVNKFSLRMFGSQKAVEREQERVKSAGAWIIHPYSD) is involved in subunit assembly. The helical transmembrane segment at 189 to 209 (FTMLLFMVGNLIIIPVGITFF) threads the bilayer. At 210 to 213 (KDET) the chain is on the extracellular side. The helical transmembrane segment at 214–234 (TAPWIVFNVVSDTFFLMDLVL) threads the bilayer. Topologically, residues 235-261 (NFRTGIVIEDNTEIILDPEKIKKKYLR) are cytoplasmic. The helical transmembrane segment at 262–282 (TWFVVDFVSSIPVDYIFLIVE) threads the bilayer. Residues 283–290 (KGIDSEVY) lie on the Extracellular side of the membrane. A helical; Voltage-sensor membrane pass occupies residues 291–311 (KTARALRIVRFTKILSLLRLL). Residues 312-342 (RLSRLIRYIHQWEEIFHMTYDLASAVMRICN) lie on the Cytoplasmic side of the membrane. A helical membrane pass occupies residues 343–363 (LISMMLLLCHWDGCLQFLVPM). Residues 364–386 (LQDFPSDCWVSINNMVNHSWSEL) are Extracellular-facing. Asn-380 is a glycosylation site (N-linked (GlcNAc...) asparagine). Positions 387–408 (YSFALFKAMSHMLCIGYGRQAP) form an intramembrane region, pore-forming. Topologically, residues 409 to 413 (ESMTD) are extracellular. The helical transmembrane segment at 414–434 (IWLTMLSMIVGATCYAMFIGH) threads the bilayer. At 435 to 863 (ATALIQSLDS…SARSRLSSNL (429 aa)) the chain is on the cytoplasmic side. The 3',5'-cyclic AMP site is built by Gly-581, Glu-582, Cys-584, Arg-591, Thr-592, and Arg-632. A Phosphoserine; by PKG/PRKG2 modification is found at Ser-641. Position 726 is a phosphoserine (Ser-726). An Omega-N-methylarginine modification is found at Arg-728. A disordered region spans residues 730–863 (VRRAPPGPLP…SARSRLSSNL (134 aa)). Residues 734-755 (PPGPLPPAASPGPPAASPPAAP) show a composition bias toward pro residues. A phosphoserine mark is found at Ser-743, Ser-750, and Ser-757. 3 stretches are compositionally biased toward low complexity: residues 756-765 (SSPRAPRTSP), 778-800 (PALP…PSLP), and 808-834 (PAAS…AAPS). Phosphoserine is present on residues Ser-840, Ser-842, and Ser-847.

Belongs to the potassium channel HCN family. As to quaternary structure, homotetramer. The channel is composed of a homo- or heterotetrameric complex of pore-forming subunits. Heterotetramer with HCN1. Forms an obligate 4:4 complex with accessory subunit PEX5L; regulates HCN2 cell-surface expression and cyclic nucleotide dependence. Interacts with KCNE2. Post-translationally, S-palmitoylated. N-glycosylated; required for cell surface trafficking of HCN2. In terms of processing, phosphorylation at Ser-641 by PRKG2 shifts the voltage-dependence to more negative voltages, hence counteracting the stimulatory effect of cGMP on gating. Highly expressed in brain. Detected at low levels in heart, in ventricle, atrium and in sinoatrial node (SAN).

Its subcellular location is the cell membrane. The catalysed reaction is Na(+)(in) = Na(+)(out). It carries out the reaction K(+)(in) = K(+)(out). The enzyme catalyses NH4(+)(in) = NH4(+)(out). With respect to regulation, activated by cAMP, and at 10-100 times higher concentrations, also by cGMP. cAMP binding causes a conformation change that leads to the assembly of an active tetramer and channel opening. In the absence of cAMP, the C-terminal region is thought to exert a tonic inhibition on the pore when HCN2 is in a non-tetrameric form. Channel activity is modulated by intracellular chloride ions and pH; acidic pH shifts the activation to more negative voltages. Phosphatidylinositol-4,5- bisphosphate (PIP(2)) acts as a ligand that allosterically opens HCN2 by shifting voltage-dependent channel activation toward depolarized potentials. Inhibited by extracellular cesium ions. Its function is as follows. Hyperpolarization-activated ion channel exhibiting weak selectivity for potassium over sodium ions. Contributes to the native pacemaker currents in heart (If) and in neurons (Ih). Can also transport ammonium in the distal nephron. Involved in the initiation of neuropathic pain in sensory neurons. The sequence is that of Potassium/sodium hyperpolarization-activated cyclic nucleotide-gated channel 2 from Mus musculus (Mouse).